The chain runs to 431 residues: L-cysteine:1D-myo-inositol 2-amino-2-deoxy-alpha-D-glucopyranoside ligase (431 aa).

C44 contacts Zn(2+). L-cysteinyl-5'-AMP contacts are provided by residues 44 to 47, T59, and 82 to 84; these read CGIT and NVT. The short motif at 46 to 56 is the 'HIGH' region element; it reads ITPYDATHLGH. The 'ERGGDP' region motif lies at 187 to 192; the sequence is ERGGDP. W227 is an L-cysteinyl-5'-AMP binding site. Residue C231 coordinates Zn(2+). L-cysteinyl-5'-AMP is bound at residue 249–251; sequence GND. H256 contributes to the Zn(2+) binding site. Residue I283 participates in L-cysteinyl-5'-AMP binding. Residues 289–293 carry the 'KMSKS' region motif; it reads KMSKS.

The protein belongs to the class-I aminoacyl-tRNA synthetase family. MshC subfamily. Monomer. It depends on Zn(2+) as a cofactor.

It catalyses the reaction 1D-myo-inositol 2-amino-2-deoxy-alpha-D-glucopyranoside + L-cysteine + ATP = 1D-myo-inositol 2-(L-cysteinylamino)-2-deoxy-alpha-D-glucopyranoside + AMP + diphosphate + H(+). Its function is as follows. Catalyzes the ATP-dependent condensation of GlcN-Ins and L-cysteine to form L-Cys-GlcN-Ins. The sequence is that of L-cysteine:1D-myo-inositol 2-amino-2-deoxy-alpha-D-glucopyranoside ligase from Stackebrandtia nassauensis (strain DSM 44728 / CIP 108903 / NRRL B-16338 / NBRC 102104 / LLR-40K-21).